The chain runs to 368 residues: Endophilin-A2 (368 aa).

The interval 1 to 21 is membrane-binding amphipathic helix; that stretch reads MSVAGLKKQFYKASQLVSEKV. The BAR domain maps to 18–249; it reads SEKVGGAEGT…LKRRVREASS (232 aa). Positions 60 to 87 are required for dimerization upon membrane association; the sequence is PNPASRAKLTMLNTVSKIRGQVKNPGYP. Residues 180–250 adopt a coiled-coil conformation; sequence DEELRQALEK…KRRVREASSR (71 aa). Positions 218–254 are interaction with ARC; that stretch reads LVDAQLDYHRQAVQILEELADKLKRRVREASSRPKRE. Residues 244-307 form a disordered region; that stretch reads VREASSRPKR…MPSKSMPPLD (64 aa). Residues 245 to 263 are compositionally biased toward basic and acidic residues; it reads REASSRPKREFKPRPREPF. Residues Ser-288 and Ser-292 each carry the phosphoserine modification. An SH3 domain is found at 306–365; it reads LDQPSCKALYDFEPENDGELGFREGDLITLTNQIDENWYEGMLHGQSGFFPLSYVQVLVP. At Tyr-315 the chain carries Phosphotyrosine.

It belongs to the endophilin family. Interacts with ARC, SYNJ1 and DNM1. Interacts with PDCD6IP. Interacts with BIN2.

Its subcellular location is the cytoplasm. The protein resides in the early endosome membrane. It localises to the cell projection. It is found in the podosome. Functionally, implicated in endocytosis. May recruit other proteins to membranes with high curvature. The sequence is that of Endophilin-A2 (Sh3gl1) from Mus musculus (Mouse).